The sequence spans 116 residues: uncharacterized protein (116 aa).

2 consecutive transmembrane segments (helical) span residues 24-44 and 70-90; these read VPFAAAGGYPISFLFIKVLTA and VILTHFLVPIFFFLFQYIILS.

The protein resides in the membrane. This is an uncharacterized protein from Saccharomyces cerevisiae (strain ATCC 204508 / S288c) (Baker's yeast).